A 93-amino-acid chain; its full sequence is Exodeoxyribonuclease 7 small subunit (93 aa).

Residues 1–17 (MAKSSASSLSSAKPVAA) are compositionally biased toward low complexity. Residues 1 to 22 (MAKSSASSLSSAKPVAAGPDAS) form a disordered region.

The protein belongs to the XseB family. As to quaternary structure, heterooligomer composed of large and small subunits.

The protein localises to the cytoplasm. It carries out the reaction Exonucleolytic cleavage in either 5'- to 3'- or 3'- to 5'-direction to yield nucleoside 5'-phosphates.. Bidirectionally degrades single-stranded DNA into large acid-insoluble oligonucleotides, which are then degraded further into small acid-soluble oligonucleotides. The sequence is that of Exodeoxyribonuclease 7 small subunit from Polaromonas naphthalenivorans (strain CJ2).